A 211-amino-acid chain; its full sequence is Proteasome subunit beta (211 aa).

Positions 1 to 9 (MSEAETLKG) are cleaved as a propeptide — removed in mature form; by autocatalysis. The active-site Nucleophile is the threonine 10.

This sequence belongs to the peptidase T1B family. The 20S proteasome core is composed of 14 alpha and 14 beta subunits that assemble into four stacked heptameric rings, resulting in a barrel-shaped structure. The two inner rings, each composed of seven catalytic beta subunits, are sandwiched by two outer rings, each composed of seven alpha subunits. The catalytic chamber with the active sites is on the inside of the barrel. Has a gated structure, the ends of the cylinder being occluded by the N-termini of the alpha-subunits. Is capped at one or both ends by the proteasome regulatory ATPase, PAN.

The protein localises to the cytoplasm. It catalyses the reaction Cleavage of peptide bonds with very broad specificity.. With respect to regulation, the formation of the proteasomal ATPase PAN-20S proteasome complex, via the docking of the C-termini of PAN into the intersubunit pockets in the alpha-rings, triggers opening of the gate for substrate entry. Interconversion between the open-gate and close-gate conformations leads to a dynamic regulation of the 20S proteasome proteolysis activity. In terms of biological role, component of the proteasome core, a large protease complex with broad specificity involved in protein degradation. The polypeptide is Proteasome subunit beta (Methanosphaerula palustris (strain ATCC BAA-1556 / DSM 19958 / E1-9c)).